Here is a 671-residue protein sequence, read N- to C-terminus: Alpha-1,4-glucan:maltose-1-phosphate maltosyltransferase (671 aa).

K252, Q312, and D347 together coordinate alpha-maltose 1-phosphate. D382 acts as the Nucleophile in catalysis. N383 contacts alpha-maltose 1-phosphate. E411 acts as the Proton donor in catalysis. 521–522 provides a ligand contact to alpha-maltose 1-phosphate; that stretch reads KY.

Belongs to the glycosyl hydrolase 13 family. GlgE subfamily. In terms of assembly, homodimer.

The catalysed reaction is alpha-maltose 1-phosphate + [(1-&gt;4)-alpha-D-glucosyl](n) = [(1-&gt;4)-alpha-D-glucosyl](n+2) + phosphate. Its function is as follows. Maltosyltransferase that uses maltose 1-phosphate (M1P) as the sugar donor to elongate linear or branched alpha-(1-&gt;4)-glucans. Is involved in a branched alpha-glucan biosynthetic pathway from trehalose, together with TreS, Mak and GlgB. In Corynebacterium pseudotuberculosis (strain 1002), this protein is Alpha-1,4-glucan:maltose-1-phosphate maltosyltransferase.